A 199-amino-acid chain; its full sequence is MIKSQTPRHDYYHILNLPFTTPPAALSKQQLKIAYHKALLKHHPDKAISVAATPARTHTHDTKTAYRSSPDRNADTSPTFTIDEITAAYKTLSDPALRAEYDRVLRLERVTAGKGDKGAEAAFHTGLEVVDLEDLVCEEMGDGEGLLCWYRGCRCGDERGFMVTEKDLEKEAEHGEVVIGCRGCSLWMKILFAMEEGDG.

A J domain is found at 10–105; the sequence is DYYHILNLPF…ALRAEYDRVL (96 aa). The tract at residues 55–77 is disordered; sequence ARTHTHDTKTAYRSSPDRNADTS. The span at 58–74 shows a compositional bias: basic and acidic residues; it reads HTHDTKTAYRSSPDRNA. The DPH-type MB domain maps to 126 to 193; that stretch reads GLEVVDLEDL…CSLWMKILFA (68 aa). 4 residues coordinate Zn(2+): Cys153, Cys155, Cys181, and Cys184.

It belongs to the DPH4 family.

The protein resides in the cytoplasm. It localises to the nucleus. It functions in the pathway protein modification; peptidyl-diphthamide biosynthesis. Functionally, required for the first step of diphthamide biosynthesis, the transfer of 3-amino-3-carboxypropyl from S-adenosyl-L-methionine to a histidine residue. Diphthamide is a post-translational modification of histidine which occurs in elongation factor 2. The chain is Diphthamide biosynthesis protein 4 (dph4) from Aspergillus fumigatus (strain ATCC MYA-4609 / CBS 101355 / FGSC A1100 / Af293) (Neosartorya fumigata).